Here is a 219-residue protein sequence, read N- to C-terminus: Elongation factor Ts (219 aa).

The interval 82–85 is involved in Mg(2+) ion dislocation from EF-Tu; sequence TDFV.

This sequence belongs to the EF-Ts family.

The protein localises to the cytoplasm. Its function is as follows. Associates with the EF-Tu.GDP complex and induces the exchange of GDP to GTP. It remains bound to the aminoacyl-tRNA.EF-Tu.GTP complex up to the GTP hydrolysis stage on the ribosome. This chain is Elongation factor Ts, found in Anaeromyxobacter dehalogenans (strain 2CP-C).